The sequence spans 218 residues: MIRTVDIYDTSIIGVFATCTEDVVLVPPLTKPEVCALLEEVLDVRVIETLVNGSIVVGALSRGNSNGFMLPYGARAEMQRFTDIPVGILPDRLNAVGNIVFANDSAALVHPDLSDKALEAIARTLKVDVYRGTIAGIKNVGMAGVVTNKGLLVHPKVTASEREVLEKIFGFPVNIGTTNFGTQMLGSGLLANSKNFVAGSETTGPELGRIEEALGFLE.

It belongs to the eIF-6 family.

Functionally, binds to the 50S ribosomal subunit and prevents its association with the 30S ribosomal subunit to form the 70S initiation complex. This is Translation initiation factor 6 from Methanosarcina acetivorans (strain ATCC 35395 / DSM 2834 / JCM 12185 / C2A).